The primary structure comprises 265 residues: Undecaprenyl-diphosphatase (265 aa).

A run of 8 helical transmembrane segments spans residues 1 to 21 (MDFI…FLPI), 39 to 61 (QGLA…YFRL), 85 to 105 (LAWA…MLTE), 115 to 135 (LIIA…DWAG), 149 to 169 (ILFI…RSGI), 187 to 207 (FSFL…ALDL), 218 to 238 (ALAL…HYFF), and 244 to 264 (IGML…FYLF).

The protein belongs to the UppP family.

The protein localises to the cell inner membrane. It carries out the reaction di-trans,octa-cis-undecaprenyl diphosphate + H2O = di-trans,octa-cis-undecaprenyl phosphate + phosphate + H(+). In terms of biological role, catalyzes the dephosphorylation of undecaprenyl diphosphate (UPP). Confers resistance to bacitracin. The protein is Undecaprenyl-diphosphatase of Nitrosococcus oceani (strain ATCC 19707 / BCRC 17464 / JCM 30415 / NCIMB 11848 / C-107).